A 231-amino-acid chain; its full sequence is Heptaprenylglyceryl phosphate synthase (231 aa).

Residue K12 participates in sn-glycerol 1-phosphate binding. Mg(2+) is bound by residues D14 and T40. Sn-glycerol 1-phosphate contacts are provided by residues 159-164, G189, and 209-210; these read YMEYSG and GN.

The protein belongs to the GGGP/HepGP synthase family. Group I subfamily. Homodimer. Mg(2+) is required as a cofactor.

The enzyme catalyses sn-glycerol 1-phosphate + all-trans-heptaprenyl diphosphate = 3-heptaprenyl-sn-glycero-1-phosphate + diphosphate. The protein operates within membrane lipid metabolism; glycerophospholipid metabolism. In terms of biological role, prenyltransferase that catalyzes in vivo the transfer of the heptaprenyl moiety of heptaprenyl pyrophosphate (HepPP; 35 carbon atoms) to the C3 hydroxyl of sn-glycerol-1-phosphate (G1P), producing heptaprenylglyceryl phosphate (HepGP). This reaction is an ether-bond-formation step in the biosynthesis of archaea-type G1P-based membrane lipids found in Bacillales. The polypeptide is Heptaprenylglyceryl phosphate synthase (Anoxybacillus flavithermus (strain DSM 21510 / WK1)).